A 287-amino-acid polypeptide reads, in one-letter code: ATP synthase gamma chain (287 aa).

This sequence belongs to the ATPase gamma chain family. F-type ATPases have 2 components, CF(1) - the catalytic core - and CF(0) - the membrane proton channel. CF(1) has five subunits: alpha(3), beta(3), gamma(1), delta(1), epsilon(1). CF(0) has three main subunits: a, b and c.

It is found in the cell inner membrane. In terms of biological role, produces ATP from ADP in the presence of a proton gradient across the membrane. The gamma chain is believed to be important in regulating ATPase activity and the flow of protons through the CF(0) complex. The chain is ATP synthase gamma chain from Stenotrophomonas maltophilia (strain K279a).